The primary structure comprises 403 residues: S-adenosylmethionine synthase (403 aa).

An ATP-binding site is contributed by histidine 14. A Mg(2+)-binding site is contributed by aspartate 16. Glutamate 42 is a binding site for K(+). Residues glutamate 55 and glutamine 99 each coordinate L-methionine. Residues 99-109 are flexible loop; sequence QSPEIAEGVDH. ATP is bound by residues 180–182, 250–251, aspartate 259, 265–266, alanine 282, and lysine 286; these read DAK, RF, and RK. L-methionine is bound at residue aspartate 259. L-methionine is bound at residue lysine 290.

This sequence belongs to the AdoMet synthase family. As to quaternary structure, homotetramer; dimer of dimers. Mg(2+) is required as a cofactor. It depends on K(+) as a cofactor.

It localises to the cytoplasm. The enzyme catalyses L-methionine + ATP + H2O = S-adenosyl-L-methionine + phosphate + diphosphate. The protein operates within amino-acid biosynthesis; S-adenosyl-L-methionine biosynthesis; S-adenosyl-L-methionine from L-methionine: step 1/1. In terms of biological role, catalyzes the formation of S-adenosylmethionine (AdoMet) from methionine and ATP. The overall synthetic reaction is composed of two sequential steps, AdoMet formation and the subsequent tripolyphosphate hydrolysis which occurs prior to release of AdoMet from the enzyme. The chain is S-adenosylmethionine synthase from Deinococcus deserti (strain DSM 17065 / CIP 109153 / LMG 22923 / VCD115).